We begin with the raw amino-acid sequence, 474 residues long: Sulfide dehydrogenase subunit alpha (474 aa).

The propeptide occupies methionine 1–proline 2. The [4Fe-4S] cluster site is built by cysteine 42, cysteine 45, cysteine 52, and cysteine 56. Residues cysteine 101, cysteine 107, and cysteine 111 each contribute to the [3Fe-4S] cluster site.

Heterodimer of alpha and beta subunits. FAD is required as a cofactor. [3Fe-4S] cluster serves as cofactor. It depends on [4Fe-4S] cluster as a cofactor.

Its subcellular location is the cytoplasm. It carries out the reaction n sulfur + hydrogen sulfide + NADP(+) = (n+1) sulfur + NADPH. It catalyses the reaction 2 reduced [2Fe-2S]-[ferredoxin] + NADP(+) + H(+) = 2 oxidized [2Fe-2S]-[ferredoxin] + NADPH. A bifunctional enzyme that catalyzes the reduction of elemental sulfur or polysulfide to hydrogen sulfide with NADPH as electron donor. Also functions as a reduced ferredoxin:NADP oxidoreductase with a very high affinity for reduced ferredoxin. Exhibits a broad specificity for various physiological and non-physiological substrates with varied reduction potentials such as methyl viologen, benzyl viologen, FAD, FMN, methylene blue, 2,6-dichlorophenolindophenol (DCIP), cytochrome C and ferricyanide with highest preference for benzyl viologen. Does not reduce fumarate, succinate, nitrate, nitrite, sulfate, sulfite or protons. Does not possess any hydrogenase activity or NADPH-dependent glutamate synthase activity. The chain is Sulfide dehydrogenase subunit alpha from Pyrococcus furiosus (strain ATCC 43587 / DSM 3638 / JCM 8422 / Vc1).